Reading from the N-terminus, the 264-residue chain is Major prion protein (264 aa).

The first 24 residues, Met1–Cys24, serve as a signal peptide directing secretion. An interaction with GRB2, ERI3 and SYN1 region spans residues Lys25–Ala241. The disordered stretch occupies residues Pro28–Asn119. Repeat copies occupy residues Pro54 to Gln62, Pro63 to Gln70, Pro71 to Gln78, Pro79 to Gln86, Pro87 to Gln94, and Pro95 to Gln103. The segment at Pro54–Gln103 is 6 X 8 AA tandem repeats of P-H-G-G-G-W-G-Q. The segment covering Gln55–Gly105 has biased composition (gly residues). Residues His72, Gly73, Gly74, His80, Gly81, Gly82, His88, Gly89, Gly90, His96, Gly98, and Gly99 each contribute to the Cu(2+) site. Cys190 and Cys225 form a disulfide bridge. N-linked (GlcNAc...) asparagine glycans are attached at residues Asn192 and Asn208. Ala241 carries GPI-anchor amidated alanine lipidation. Positions Ser242 to Gly264 are cleaved as a propeptide — removed in mature form.

Belongs to the prion family. In terms of assembly, monomer and homodimer. Has a tendency to aggregate into amyloid fibrils containing a cross-beta spine, formed by a steric zipper of superposed beta-strands. Soluble oligomers may represent an intermediate stage on the path to fibril formation. Copper binding may promote oligomerization. Interacts with GRB2, APP, ERI3/PRNPIP and SYN1. Mislocalized cytosolically exposed PrP interacts with MGRN1; this interaction alters MGRN1 subcellular location and causes lysosomal enlargement. Interacts with KIAA1191.

The protein resides in the cell membrane. It is found in the golgi apparatus. Its primary physiological function is unclear. Has cytoprotective activity against internal or environmental stresses. May play a role in neuronal development and synaptic plasticity. May be required for neuronal myelin sheath maintenance. May play a role in iron uptake and iron homeostasis. Soluble oligomers are toxic to cultured neuroblastoma cells and induce apoptosis (in vitro). Association with GPC1 (via its heparan sulfate chains) targets PRNP to lipid rafts. Also provides Cu(2+) or Zn(2+) for the ascorbate-mediated GPC1 deaminase degradation of its heparan sulfate side chains. The protein is Major prion protein (PRNP) of Antilope cervicapra (Blackbuck).